The chain runs to 623 residues: Interferon-induced GTP-binding protein Mx3 (623 aa).

One can recognise a Dynamin-type G domain in the interval 31–304 (DLALPAIAVI…LVHHIEKSLP (274 aa)). The interval 41 to 48 (GDQSSGKS) is G1 motif. 41–48 (GDQSSGKS) provides a ligand contact to GTP. The tract at residues 66 to 68 (VTR) is G2 motif. The segment at 142-145 (DLPG) is G3 motif. Residues 142-146 (DLPGI) and 211-214 (TKPD) each bind GTP. Residues 211–214 (TKPD) form a G4 motif region. The tract at residues 243–246 (KCRG) is G5 motif. Residues 537 to 623 (LQEMMLHLKS…MKARSYLVEF (87 aa)) enclose the GED domain.

Belongs to the TRAFAC class dynamin-like GTPase superfamily. Dynamin/Fzo/YdjA family.

Its subcellular location is the cytoplasm. Does not inhibit strain RB-1 of the fish pathogen, infectious hematopoietic necrosis virus (IHNV). The polypeptide is Interferon-induced GTP-binding protein Mx3 (Oncorhynchus mykiss (Rainbow trout)).